Here is a 346-residue protein sequence, read N- to C-terminus: Small ribosomal subunit biogenesis GTPase RsgA (346 aa).

A disordered region spans residues 1–26 (MAKRKLTQNQTRRIQSNNAKTLHRHK). The span at 7 to 20 (TQNQTRRIQSNNAK) shows a compositional bias: polar residues. The region spanning 103 to 271 (ENEISRPDYY…LIDSPGIREF (169 aa)) is the CP-type G domain. GTP-binding positions include 159–162 (NKVD) and 213–221 (GQSGVGKSS). Residues cysteine 295, cysteine 300, histidine 302, and cysteine 308 each contribute to the Zn(2+) site.

Belongs to the TRAFAC class YlqF/YawG GTPase family. RsgA subfamily. As to quaternary structure, monomer. Associates with 30S ribosomal subunit, binds 16S rRNA. The cofactor is Zn(2+).

It localises to the cytoplasm. One of several proteins that assist in the late maturation steps of the functional core of the 30S ribosomal subunit. Helps release RbfA from mature subunits. May play a role in the assembly of ribosomal proteins into the subunit. Circularly permuted GTPase that catalyzes slow GTP hydrolysis, GTPase activity is stimulated by the 30S ribosomal subunit. The chain is Small ribosomal subunit biogenesis GTPase RsgA from Haemophilus influenzae (strain PittEE).